We begin with the raw amino-acid sequence, 170 residues long: 2S seed storage protein 2 (170 aa).

Positions 1–21 (MANKLFLVCATFALCFLLTNA) are cleaved as a signal peptide. Propeptides lie at residues 22 to 37 (SIYR…DASN) and 73 to 88 (GPSL…DIEN).

Belongs to the 2S seed storage albumins family. In terms of assembly, the mature protein consists of a small and a large chain linked by disulfide bonds.

This is a 2S seed storage protein. This chain is 2S seed storage protein 2 (AT2S2), found in Arabidopsis thaliana (Mouse-ear cress).